A 436-amino-acid chain; its full sequence is Mitochondrial distribution and morphology protein 12 (436 aa).

Positions methionine 1–isoleucine 436 constitute an SMP-LTD domain. A compositionally biased stretch (acidic residues) spans aspartate 73–glutamate 84. 3 disordered regions span residues aspartate 73 to threonine 98, alanine 184 to glutamate 275, and glycine 352 to lysine 380. Over residues glutamate 85 to threonine 98 the composition is skewed to basic and acidic residues. Polar residues-rich tracts occupy residues proline 190–lysine 206 and aspartate 222–serine 243. The span at serine 244 to aspartate 255 shows a compositional bias: basic and acidic residues. A compositionally biased stretch (polar residues) spans proline 256–asparagine 267.

Belongs to the MDM12 family. Component of the ER-mitochondria encounter structure (ERMES) or MDM complex, composed of mmm1, mdm10, mdm12 and mdm34. A mmm1 homodimer associates with one molecule of mdm12 on each side in a pairwise head-to-tail manner, and the SMP-LTD domains of mmm1 and mdm12 generate a continuous hydrophobic tunnel for phospholipid trafficking.

The protein resides in the mitochondrion outer membrane. It is found in the endoplasmic reticulum membrane. Its function is as follows. Component of the ERMES/MDM complex, which serves as a molecular tether to connect the endoplasmic reticulum (ER) and mitochondria. Components of this complex are involved in the control of mitochondrial shape and protein biogenesis, and function in nonvesicular lipid trafficking between the ER and mitochondria. Mdm12 is required for the interaction of the ER-resident membrane protein mmm1 and the outer mitochondrial membrane-resident beta-barrel protein mdm10. The mdm12-mmm1 subcomplex functions in the major beta-barrel assembly pathway that is responsible for biogenesis of all mitochondrial outer membrane beta-barrel proteins, and acts in a late step after the SAM complex. The mdm10-mdm12-mmm1 subcomplex further acts in the TOM40-specific pathway after the action of the mdm12-mmm1 complex. Essential for establishing and maintaining the structure of mitochondria and maintenance of mtDNA nucleoids. This Emericella nidulans (strain FGSC A4 / ATCC 38163 / CBS 112.46 / NRRL 194 / M139) (Aspergillus nidulans) protein is Mitochondrial distribution and morphology protein 12.